Here is a 341-residue protein sequence, read N- to C-terminus: Methionine import ATP-binding protein MetN 2 (341 aa).

Residues 2–241 (ILLENVKKIY…PQQDITKRFV (240 aa)) form the ABC transporter domain. 38 to 45 (GYSGAGKS) provides a ligand contact to ATP.

This sequence belongs to the ABC transporter superfamily. Methionine importer (TC 3.A.1.24) family. As to quaternary structure, the complex is composed of two ATP-binding proteins (MetN), two transmembrane proteins (MetI) and a solute-binding protein (MetQ).

It is found in the cell membrane. The catalysed reaction is L-methionine(out) + ATP + H2O = L-methionine(in) + ADP + phosphate + H(+). The enzyme catalyses D-methionine(out) + ATP + H2O = D-methionine(in) + ADP + phosphate + H(+). In terms of biological role, part of the ABC transporter complex MetNIQ involved in methionine import. Responsible for energy coupling to the transport system. This Bacillus thuringiensis subsp. konkukian (strain 97-27) protein is Methionine import ATP-binding protein MetN 2.